The primary structure comprises 120 residues: Large ribosomal subunit protein bL19 (120 aa).

The protein belongs to the bacterial ribosomal protein bL19 family.

Its function is as follows. This protein is located at the 30S-50S ribosomal subunit interface and may play a role in the structure and function of the aminoacyl-tRNA binding site. The sequence is that of Large ribosomal subunit protein bL19 from Acaryochloris marina (strain MBIC 11017).